A 109-amino-acid polypeptide reads, in one-letter code: Large ribosomal subunit protein uL22 (109 aa).

Belongs to the universal ribosomal protein uL22 family. As to quaternary structure, part of the 50S ribosomal subunit.

In terms of biological role, this protein binds specifically to 23S rRNA; its binding is stimulated by other ribosomal proteins, e.g. L4, L17, and L20. It is important during the early stages of 50S assembly. It makes multiple contacts with different domains of the 23S rRNA in the assembled 50S subunit and ribosome. Functionally, the globular domain of the protein is located near the polypeptide exit tunnel on the outside of the subunit, while an extended beta-hairpin is found that lines the wall of the exit tunnel in the center of the 70S ribosome. The protein is Large ribosomal subunit protein uL22 of Cupriavidus taiwanensis (strain DSM 17343 / BCRC 17206 / CCUG 44338 / CIP 107171 / LMG 19424 / R1) (Ralstonia taiwanensis (strain LMG 19424)).